The primary structure comprises 173 residues: Ribosome maturation factor RimM (173 aa).

The 79-residue stretch at 95-173 (EGEYYWRQLE…LMVVDWDPDF (79 aa)) folds into the PRC barrel domain.

It belongs to the RimM family. Binds ribosomal protein uS19.

It is found in the cytoplasm. An accessory protein needed during the final step in the assembly of 30S ribosomal subunit, possibly for assembly of the head region. Essential for efficient processing of 16S rRNA. May be needed both before and after RbfA during the maturation of 16S rRNA. It has affinity for free ribosomal 30S subunits but not for 70S ribosomes. In Hahella chejuensis (strain KCTC 2396), this protein is Ribosome maturation factor RimM.